A 112-amino-acid polypeptide reads, in one-letter code: Probable small nuclear ribonucleoprotein Sm D2 (112 aa).

Basic and acidic residues predominate over residues 1-15 (MSRMNDETMEDKPDD). The disordered stretch occupies residues 1–23 (MSRMNDETMEDKPDDSNGPLSIL). One can recognise a Sm domain in the interval 20–106 (LSILMDSVNN…VILVLKNPLG (87 aa)).

Belongs to the snRNP core protein family.

Its subcellular location is the nucleus. The protein resides in the cytoplasm. The protein localises to the cytosol. Functionally, plays a role in pre-mRNA splicing as a core component of the spliceosomal U1, U2, U4 and U5 small nuclear ribonucleoproteins (snRNPs), the building blocks of the spliceosome. This Dictyostelium discoideum (Social amoeba) protein is Probable small nuclear ribonucleoprotein Sm D2 (snrpd2).